A 348-amino-acid chain; its full sequence is Chaperone protein DnaJ (348 aa).

The 63-residue stretch at 3-65 (DLYGILGVDH…EQRQRYDRHV (63 aa)) folds into the J domain. The CR-type zinc-finger motif lies at 109-191 (GGSQVVKIDS…CYGNGSRSAP (83 aa)). Residues Cys-122, Cys-125, Cys-139, Cys-142, Cys-165, Cys-168, Cys-179, and Cys-182 each coordinate Zn(2+). CXXCXGXG motif repeat units lie at residues 122–129 (CDVCNGTR), 139–146 (CFDCNGSG), 165–172 (CSKCRGNG), and 179–186 (CRRCYGNG).

This sequence belongs to the DnaJ family. As to quaternary structure, homodimer. Zn(2+) is required as a cofactor.

Its subcellular location is the cytoplasm. Its function is as follows. Participates actively in the response to hyperosmotic and heat shock by preventing the aggregation of stress-denatured proteins and by disaggregating proteins, also in an autonomous, DnaK-independent fashion. Unfolded proteins bind initially to DnaJ; upon interaction with the DnaJ-bound protein, DnaK hydrolyzes its bound ATP, resulting in the formation of a stable complex. GrpE releases ADP from DnaK; ATP binding to DnaK triggers the release of the substrate protein, thus completing the reaction cycle. Several rounds of ATP-dependent interactions between DnaJ, DnaK and GrpE are required for fully efficient folding. Also involved, together with DnaK and GrpE, in the DNA replication of plasmids through activation of initiation proteins. The sequence is that of Chaperone protein DnaJ from Tropheryma whipplei (strain TW08/27) (Whipple's bacillus).